The chain runs to 35 residues: Kunitz-type proteinase inhibitor AEPI-III (35 aa).

One can recognise a BPTI/Kunitz inhibitor domain in the interval 4-35 (CNLPAVVGRCKGYFPRYFYNTEAGKCQRFIYG).

The protein belongs to the venom Kunitz-type family. Sea anemone type 2 potassium channel toxin subfamily.

Its subcellular location is the secreted. The protein localises to the nematocyst. In terms of biological role, dual-function toxin that inhibits both the serine protease trypsin and voltage-gated potassium channels (Kv). The chain is Kunitz-type proteinase inhibitor AEPI-III from Actinia equina (Beadlet anemone).